A 310-amino-acid chain; its full sequence is Syntaxin-81 (310 aa).

Over 1–289 the chain is Cytoplasmic; sequence MSRFRDRTED…QAIQRNSSSR (289 aa). The stretch at 77–114 forms a coiled coil; it reads RTTEQEKDSIEQEVAAFIKACKEQIDILINSIRNEEAN. The chain crosses the membrane as a helical; Anchor for type IV membrane protein span at residues 290-310; that stretch reads TFLLLFFFVLTFSVLFLDWYS.

Belongs to the syntaxin family. As to quaternary structure, part of the t-SNARE complex. Interacts with MAG2.

It localises to the membrane. In terms of biological role, vesicle trafficking protein that functions in the secretory pathway. This chain is Syntaxin-81 (SYP81), found in Arabidopsis thaliana (Mouse-ear cress).